A 231-amino-acid chain; its full sequence is Aquaporin Z (231 aa).

2 helical membrane passes run 9–29 and 34–54; these read LLGT…AAAF and IGFV…IYAV. The NPA 1 signature appears at 63–65; that stretch reads NPA. Transmembrane regions (helical) follow at residues 82-102, 133-153, and 160-180; these read IPYI…LYVI, SAIV…IGAT, and GFAP…SIPI. Positions 186-188 match the NPA 2 motif; that stretch reads NPA. The helical transmembrane segment at 202–222 threads the bilayer; it reads LEQLWFFWVMPIIGGIVGGGI.

The protein belongs to the MIP/aquaporin (TC 1.A.8) family. In terms of assembly, homotetramer.

It is found in the cell inner membrane. It carries out the reaction H2O(in) = H2O(out). Functionally, channel that permits osmotically driven movement of water in both directions. It is involved in the osmoregulation and in the maintenance of cell turgor during volume expansion in rapidly growing cells. It mediates rapid entry or exit of water in response to abrupt changes in osmolarity. This is Aquaporin Z from Photorhabdus laumondii subsp. laumondii (strain DSM 15139 / CIP 105565 / TT01) (Photorhabdus luminescens subsp. laumondii).